Reading from the N-terminus, the 296-residue chain is 3-methyl-2-oxobutanoate hydroxymethyltransferase (296 aa).

Positions 1–14 (MTAPTPTPANAATP) are enriched in low complexity. Residues 1-29 (MTAPTPTPANAATPYGTLPPASPLPQRRP) are disordered. Mg(2+)-binding residues include aspartate 71 and aspartate 114. 3-methyl-2-oxobutanoate is bound by residues 71–72 (DS), aspartate 114, and lysine 143. Glutamate 145 serves as a coordination point for Mg(2+). Residue glutamate 212 is the Proton acceptor of the active site.

It belongs to the PanB family. Homodecamer; pentamer of dimers. It depends on Mg(2+) as a cofactor.

It is found in the cytoplasm. The enzyme catalyses 3-methyl-2-oxobutanoate + (6R)-5,10-methylene-5,6,7,8-tetrahydrofolate + H2O = 2-dehydropantoate + (6S)-5,6,7,8-tetrahydrofolate. Its pathway is cofactor biosynthesis; (R)-pantothenate biosynthesis; (R)-pantoate from 3-methyl-2-oxobutanoate: step 1/2. Its function is as follows. Catalyzes the reversible reaction in which hydroxymethyl group from 5,10-methylenetetrahydrofolate is transferred onto alpha-ketoisovalerate to form ketopantoate. The polypeptide is 3-methyl-2-oxobutanoate hydroxymethyltransferase (Paracidovorax citrulli (strain AAC00-1) (Acidovorax citrulli)).